The primary structure comprises 84 residues: U8-theraphotoxin-Hhn1g (84 aa).

Positions 1–21 are cleaved as a signal peptide; it reads MKVVLLVCLVWMMAMMELVSC. Cystine bridges form between Cys23-Cys35, Cys29-Cys44, Cys34-Cys67, Cys54-Cys75, and Cys69-Cys81.

It belongs to the AVIT (prokineticin) family. Expressed by the venom gland.

It is found in the secreted. The sequence is that of U8-theraphotoxin-Hhn1g from Cyriopagopus hainanus (Chinese bird spider).